Reading from the N-terminus, the 483-residue chain is Cobyric acid synthase (483 aa).

One can recognise a GATase cobBQ-type domain in the interval 251–438 (ALIVAVPMLP…LHGVFSADRF (188 aa)). Residue cysteine 333 is the Nucleophile of the active site. Histidine 430 is an active-site residue.

This sequence belongs to the CobB/CobQ family. CobQ subfamily.

Its pathway is cofactor biosynthesis; adenosylcobalamin biosynthesis. In terms of biological role, catalyzes amidations at positions B, D, E, and G on adenosylcobyrinic A,C-diamide. NH(2) groups are provided by glutamine, and one molecule of ATP is hydrogenolyzed for each amidation. The protein is Cobyric acid synthase of Brucella canis (strain ATCC 23365 / NCTC 10854 / RM-666).